Reading from the N-terminus, the 230-residue chain is Orotidine 5'-phosphate decarboxylase (230 aa).

Residues D10, K32, 59–68, T119, R180, Q189, G209, and R210 contribute to the substrate site; that span reads DLKYHDIPNT. Residue K61 is the Proton donor of the active site.

This sequence belongs to the OMP decarboxylase family. Type 1 subfamily. Homodimer.

The catalysed reaction is orotidine 5'-phosphate + H(+) = UMP + CO2. It participates in pyrimidine metabolism; UMP biosynthesis via de novo pathway; UMP from orotate: step 2/2. Catalyzes the decarboxylation of orotidine 5'-monophosphate (OMP) to uridine 5'-monophosphate (UMP). This is Orotidine 5'-phosphate decarboxylase from Haemophilus influenzae (strain ATCC 51907 / DSM 11121 / KW20 / Rd).